The chain runs to 217 residues: MEDRFEIGRIVRAKTISDAWYRGLNIIRNHGQVITDERGSQIREFMDLMIIIEDPYTDRIPHETAWNEERLEEYAKQLISGENTQDFEYTYGQRLRNWHGKVDQIDYVIEKLQQNPTSRRAIAVTWIPPVDTKVNEVPCMMLDDFKIRDGKIHLTTLFRSHDFGGAYPANLYGLSKLLEYVADKVGTKPGTITTISISAHIYDHDWDMVENIVKGVN.

Cysteine 139 is an active-site residue.

The protein belongs to the thymidylate synthase family. Archaeal-type ThyA subfamily. As to quaternary structure, monomer.

It is found in the cytoplasm. It functions in the pathway pyrimidine metabolism; dTTP biosynthesis. In terms of biological role, may catalyze the biosynthesis of dTMP using an unknown cosubstrate. This chain is Putative thymidylate synthase, found in Methanosarcina barkeri (strain Fusaro / DSM 804).